Reading from the N-terminus, the 262-residue chain is uncharacterized protein (262 aa).

His-7, His-9, Glu-98, His-138, His-162, and Asp-212 together coordinate a divalent metal cation.

The protein belongs to the metallo-dependent hydrolases superfamily. TatD-type hydrolase family. The cofactor is a divalent metal cation.

This is an uncharacterized protein from Haemophilus influenzae (strain ATCC 51907 / DSM 11121 / KW20 / Rd).